The primary structure comprises 228 residues: Protein JAZ7 (228 aa).

The 36-residue stretch at 101-136 (LSPNESTLTIFYMGEVHIFPGISPEKAELIIDLVSK) folds into the Tify domain. Positions 176 to 199 (MARRATLARFLEKRKHRLIKARPY) match the Jas motif. The Nuclear localization signal motif lies at 177–184 (ARRATLAR).

It belongs to the TIFY/JAZ family. As to quaternary structure, interacts with MYC2 (via N-terminus). JAZ7 competes with MED25 for binding to MYC2. Interacts with MTB1 (via N-terminus).

It localises to the nucleus. Its function is as follows. Repressor of jasmonate responses. The polypeptide is Protein JAZ7 (Solanum lycopersicum (Tomato)).